We begin with the raw amino-acid sequence, 518 residues long: MVGAGEGDRVGGGAAVGGGQQFVDRSKVRILLCDSDPSSSREVLRLLCNCSYQVTCAKSPRQVINVLNCEAGEIDIILAEVDLPVSKCFKMLKYIARNKELRHIPIIMMSNRDEVSVVVKCLRLGAAEYLVKPLRMNELLNLWTHVWRRRRMLGLSEKNFFNDNFELALSEPSDANTNSTTLLSDDTDDKPKENINQETSTSNQHEYESNPSDAEPKQKGTPEGLLVSTEGGDQASSPGVMFSRPIKTNLRVAESSAFLAYVKSSTPTTSSFDSELQKGGNRLDSSDHRGNFSSTTDRSDTGTDVNIRDKEAFEMPVQYPVVCFSSSNLHLERSNEGQNDASGTPPVYHFPFYYPGMMDHGMTHPPVQNFQGNINNAQVHTPQTLLPQYNVYPQCHGVSMMPPFQYNPAGMSIQSNQLPTQNMWPQASSTPMPEETCSRSERRAAALAKFRLKRKERCFDKKVRYVNRKKLAETRPRVRGQFVRQANYTDITSTGDDISEDEDDDPSSREVEMVSSPE.

In terms of domain architecture, Response regulatory spans 29–147 (RILLCDSDPS…ELLNLWTHVW (119 aa)). Disordered regions lie at residues 172-241 (PSDA…PGVM), 266-305 (TPTT…GTDV), and 483-518 (VRQA…SSPE). Over residues 196–212 (NQETSTSNQHEYESNPS) the composition is skewed to polar residues. Residues 443–485 (RAAALAKFRLKRKERCFDKKVRYVNRKKLAETRPRVRGQFVRQ) enclose the CCT domain.

The protein belongs to the ARR-like family. Interacts with PIL13. Interacts with PIL15.

Its subcellular location is the nucleus. Its function is as follows. Controls photoperiodic flowering response. Seems to be one of the component of the circadian clock. Expression of several members of the ARR-like family is controlled by circadian rhythm. The particular coordinated sequential expression of PRR73, PRR37, PRR95, PRR59 and PPR1 result to circadian waves that may be at the basis of the endogenous circadian clock. The chain is Two-component response regulator-like PRR1 (PRR1) from Oryza sativa subsp. japonica (Rice).